We begin with the raw amino-acid sequence, 979 residues long: Putative transcription initiation factor TFIID 111 kDa subunit (979 aa).

S244 carries the phosphoserine modification.

TFIID is composed of TATA binding protein (TBP) and a number of TBP-associated factors (TAFs).

The protein resides in the nucleus. Functionally, TAFs are components of the transcription factor IID (TFIID) complex that are essential for mediating regulation of RNA polymerase transcription. This Schizosaccharomyces pombe (strain 972 / ATCC 24843) (Fission yeast) protein is Putative transcription initiation factor TFIID 111 kDa subunit.